We begin with the raw amino-acid sequence, 195 residues long: Holliday junction branch migration complex subunit RuvA (195 aa).

The tract at residues 1–61 (MYEYLDGVVV…ENDQTLYGFK (61 aa)) is domain I. Residues 62 to 139 (KAEDKELFLN…AVENEVGTLF (78 aa)) are domain II. A flexible linker region spans residues 139 to 143 (FDLST). The segment at 144-195 (TSNQALDEALEALIALGYSEKEVKKLTKKLSEQTDRTTDQYISSGLKLLMKG) is domain III.

Belongs to the RuvA family. Homotetramer. Forms an RuvA(8)-RuvB(12)-Holliday junction (HJ) complex. HJ DNA is sandwiched between 2 RuvA tetramers; dsDNA enters through RuvA and exits via RuvB. An RuvB hexamer assembles on each DNA strand where it exits the tetramer. Each RuvB hexamer is contacted by two RuvA subunits (via domain III) on 2 adjacent RuvB subunits; this complex drives branch migration. In the full resolvosome a probable DNA-RuvA(4)-RuvB(12)-RuvC(2) complex forms which resolves the HJ.

The protein localises to the cytoplasm. The RuvA-RuvB-RuvC complex processes Holliday junction (HJ) DNA during genetic recombination and DNA repair, while the RuvA-RuvB complex plays an important role in the rescue of blocked DNA replication forks via replication fork reversal (RFR). RuvA specifically binds to HJ cruciform DNA, conferring on it an open structure. The RuvB hexamer acts as an ATP-dependent pump, pulling dsDNA into and through the RuvAB complex. HJ branch migration allows RuvC to scan DNA until it finds its consensus sequence, where it cleaves and resolves the cruciform DNA. The sequence is that of Holliday junction branch migration complex subunit RuvA from Pediococcus pentosaceus (strain ATCC 25745 / CCUG 21536 / LMG 10740 / 183-1w).